A 144-amino-acid chain; its full sequence is D-aminoacyl-tRNA deacylase (144 aa).

Residues 136–137 (GP) carry the Gly-cisPro motif, important for rejection of L-amino acids motif.

Belongs to the DTD family. Homodimer.

Its subcellular location is the cytoplasm. It catalyses the reaction glycyl-tRNA(Ala) + H2O = tRNA(Ala) + glycine + H(+). It carries out the reaction a D-aminoacyl-tRNA + H2O = a tRNA + a D-alpha-amino acid + H(+). Its function is as follows. An aminoacyl-tRNA editing enzyme that deacylates mischarged D-aminoacyl-tRNAs. Also deacylates mischarged glycyl-tRNA(Ala), protecting cells against glycine mischarging by AlaRS. Acts via tRNA-based rather than protein-based catalysis; rejects L-amino acids rather than detecting D-amino acids in the active site. By recycling D-aminoacyl-tRNA to D-amino acids and free tRNA molecules, this enzyme counteracts the toxicity associated with the formation of D-aminoacyl-tRNA entities in vivo and helps enforce protein L-homochirality. The sequence is that of D-aminoacyl-tRNA deacylase from Vibrio vulnificus (strain CMCP6).